A 210-amino-acid polypeptide reads, in one-letter code: Shikimate kinase (210 aa).

34-39 provides a ligand contact to ATP; that stretch reads GVGKSV. Residue S38 participates in Mg(2+) binding. Substrate is bound by residues D56, R80, and G102. ATP is bound at residue R140. R159 provides a ligand contact to substrate.

The protein belongs to the shikimate kinase family. Monomer. It depends on Mg(2+) as a cofactor.

Its subcellular location is the cytoplasm. The catalysed reaction is shikimate + ATP = 3-phosphoshikimate + ADP + H(+). The protein operates within metabolic intermediate biosynthesis; chorismate biosynthesis; chorismate from D-erythrose 4-phosphate and phosphoenolpyruvate: step 5/7. Catalyzes the specific phosphorylation of the 3-hydroxyl group of shikimic acid using ATP as a cosubstrate. The sequence is that of Shikimate kinase from Bartonella henselae (strain ATCC 49882 / DSM 28221 / CCUG 30454 / Houston 1) (Rochalimaea henselae).